The following is a 181-amino-acid chain: Trafficking protein particle complex subunit 3-like protein (181 aa).

Cys68 carries the S-palmitoyl cysteine lipid modification.

Belongs to the TRAPP small subunits family. BET3 subfamily. Homodimer. Component of the multisubunit TRAPP (transport protein particle) complex, which includes at least TRAPPC2, TRAPPC2L, TRAPPC3, TRAPPC3L, TRAPPC4, TRAPPC5, TRAPPC8, TRAPPC9, TRAPPC10, TRAPPC11 and TRAPPC12.

The protein localises to the golgi apparatus. The protein resides in the cis-Golgi network. It is found in the endoplasmic reticulum. In terms of biological role, may play a role in vesicular transport from endoplasmic reticulum to Golgi. The chain is Trafficking protein particle complex subunit 3-like protein (Trappc3l) from Mus musculus (Mouse).